Here is a 553-residue protein sequence, read N- to C-terminus: Replication factor C large subunit (553 aa).

Residue 50–57 (GGPGVGKT) coordinates ATP. The tract at residues 438–553 (GKRPGKPEAG…SKKQRTLFDF (116 aa)) is disordered. The span at 442–451 (GKPEAGEPRE) shows a compositional bias: basic and acidic residues. A compositionally biased stretch (low complexity) spans 503–513 (EAPMAAAMPAA). The segment covering 532 to 553 (EPEKPPAAEDKCSKKQRTLFDF) has biased composition (basic and acidic residues).

Belongs to the activator 1 small subunits family. RfcL subfamily. In terms of assembly, heteromultimer composed of small subunits (RfcS) and large subunits (RfcL).

In terms of biological role, part of the RFC clamp loader complex which loads the PCNA sliding clamp onto DNA. This chain is Replication factor C large subunit, found in Methanocella arvoryzae (strain DSM 22066 / NBRC 105507 / MRE50).